The following is a 372-amino-acid chain: Integral membrane protein GPR137B (372 aa).

Over 1–32 (MESPAWDATKNDSLPPTLTPAVPPYVKLGLTT) the chain is Lumenal. Asparagine 11 carries N-linked (GlcNAc...) asparagine glycosylation. A helical transmembrane segment spans residues 33-53 (VYTIFYLLLFAFVYVQLWLVL). Residues 54-64 (HYKHKRFSYQT) are Cytoplasmic-facing. Residues 65–85 (VFLFLCLLWASLRAVLFSFYF) form a helical membrane-spanning segment. Residues 86–93 (RNFVEANR) are Lumenal-facing. The helical transmembrane segment at 94–114 (LGAFTFWLLYCFPVCLQFFTL) threads the bilayer. Over 115-144 (TLMNLYFARVIYKAKSKYLPELIKYRLPLY) the chain is Cytoplasmic. Residues 145 to 165 (LAFLVISLLFLVVNLTCAILV) form a helical membrane-spanning segment. Residues 166 to 173 (KTDYAETK) are Lumenal-facing. Residues 174-194 (VIVSIRVAINDTLFVLCAVSL) form a helical membrane-spanning segment. The Cytoplasmic portion of the chain corresponds to 195-222 (SVCLYKISKMSLAGVYLESKGSSVCQVT). A helical transmembrane segment spans residues 223–243 (CIGVTVILLYTSRACYNLVVL). Topologically, residues 244 to 276 (SLSDSRYSSFDYDWYNVSDQADLKCKLGDAGYV) are lumenal. Residue asparagine 259 is glycosylated (N-linked (GlcNAc...) asparagine). The helical transmembrane segment at 277–297 (VFGIILFIWELFPTSLVVYFF) threads the bilayer. Topologically, residues 298–372 (RVRNSAQDMT…QTGSLQRDST (75 aa)) are cytoplasmic.

This sequence belongs to the GPR137 family.

The protein localises to the lysosome membrane. Lysosomal integral membrane protein that regulates the localization and activity of mTORC1, a signaling complex promoting cell growth in response to growth factors, energy levels, and amino acids. Interacts with Rag GTPases and increases the lysosomial localization and activity of Rag GTPases and thereby regulates mTORC1 translocation and activity in lysosome. Involved in the regulation of lysosomal morphology and autophagy. Also acts as a negative regulator of osteoclast activity. In terms of biological role, also acts as a negative regulator of osteoclast activity. This is Integral membrane protein GPR137B (gpr137b) from Xenopus laevis (African clawed frog).